Consider the following 123-residue polypeptide: Large ribosomal subunit protein bL19 (123 aa).

The protein belongs to the bacterial ribosomal protein bL19 family.

This protein is located at the 30S-50S ribosomal subunit interface and may play a role in the structure and function of the aminoacyl-tRNA binding site. The sequence is that of Large ribosomal subunit protein bL19 from Thermomicrobium roseum (strain ATCC 27502 / DSM 5159 / P-2).